The sequence spans 255 residues: Geranylgeranylglyceryl phosphate synthase (255 aa).

Asp-34 and Thr-64 together coordinate Mg(2+). Sn-glycerol 1-phosphate contacts are provided by residues 182 to 188, 213 to 214, and 235 to 236; these read YLEAGSG, GG, and GN.

Belongs to the GGGP/HepGP synthase family. Group II subfamily. Requires Mg(2+) as cofactor.

Its subcellular location is the cytoplasm. The catalysed reaction is sn-glycerol 1-phosphate + (2E,6E,10E)-geranylgeranyl diphosphate = sn-3-O-(geranylgeranyl)glycerol 1-phosphate + diphosphate. The protein operates within membrane lipid metabolism; glycerophospholipid metabolism. Prenyltransferase that catalyzes the transfer of the geranylgeranyl moiety of geranylgeranyl diphosphate (GGPP) to the C3 hydroxyl of sn-glycerol-1-phosphate (G1P). This reaction is the first ether-bond-formation step in the biosynthesis of archaeal membrane lipids. In Saccharolobus islandicus (strain M.16.27) (Sulfolobus islandicus), this protein is Geranylgeranylglyceryl phosphate synthase.